The following is a 565-amino-acid chain: Dihydroxy-acid dehydratase (565 aa).

Residue Asp-80 coordinates Mg(2+). Cys-121 lines the [2Fe-2S] cluster pocket. 2 residues coordinate Mg(2+): Asp-122 and Lys-123. Lys-123 is subject to N6-carboxylysine. Residue Cys-194 participates in [2Fe-2S] cluster binding. Position 447 (Glu-447) interacts with Mg(2+). Ser-473 acts as the Proton acceptor in catalysis.

This sequence belongs to the IlvD/Edd family. In terms of assembly, homodimer. [2Fe-2S] cluster is required as a cofactor. Mg(2+) serves as cofactor.

It carries out the reaction (2R)-2,3-dihydroxy-3-methylbutanoate = 3-methyl-2-oxobutanoate + H2O. The catalysed reaction is (2R,3R)-2,3-dihydroxy-3-methylpentanoate = (S)-3-methyl-2-oxopentanoate + H2O. The protein operates within amino-acid biosynthesis; L-isoleucine biosynthesis; L-isoleucine from 2-oxobutanoate: step 3/4. It participates in amino-acid biosynthesis; L-valine biosynthesis; L-valine from pyruvate: step 3/4. Functionally, functions in the biosynthesis of branched-chain amino acids. Catalyzes the dehydration of (2R,3R)-2,3-dihydroxy-3-methylpentanoate (2,3-dihydroxy-3-methylvalerate) into 2-oxo-3-methylpentanoate (2-oxo-3-methylvalerate) and of (2R)-2,3-dihydroxy-3-methylbutanoate (2,3-dihydroxyisovalerate) into 2-oxo-3-methylbutanoate (2-oxoisovalerate), the penultimate precursor to L-isoleucine and L-valine, respectively. This is Dihydroxy-acid dehydratase from Pelodictyon phaeoclathratiforme (strain DSM 5477 / BU-1).